Reading from the N-terminus, the 169-residue chain is S-ribosylhomocysteine lyase (169 aa).

Residues H54, H58, and C128 each coordinate Fe cation.

This sequence belongs to the LuxS family. In terms of assembly, homodimer. Fe cation serves as cofactor.

The catalysed reaction is S-(5-deoxy-D-ribos-5-yl)-L-homocysteine = (S)-4,5-dihydroxypentane-2,3-dione + L-homocysteine. Functionally, involved in the synthesis of autoinducer 2 (AI-2) which is secreted by bacteria and is used to communicate both the cell density and the metabolic potential of the environment. The regulation of gene expression in response to changes in cell density is called quorum sensing. Catalyzes the transformation of S-ribosylhomocysteine (RHC) to homocysteine (HC) and 4,5-dihydroxy-2,3-pentadione (DPD). In Shewanella amazonensis (strain ATCC BAA-1098 / SB2B), this protein is S-ribosylhomocysteine lyase.